Reading from the N-terminus, the 378-residue chain is Anhydro-N-acetylmuramic acid kinase (378 aa).

22 to 29 (GTSLDGAD) serves as a coordination point for ATP.

The protein belongs to the anhydro-N-acetylmuramic acid kinase family.

The catalysed reaction is 1,6-anhydro-N-acetyl-beta-muramate + ATP + H2O = N-acetyl-D-muramate 6-phosphate + ADP + H(+). Its pathway is amino-sugar metabolism; 1,6-anhydro-N-acetylmuramate degradation. It participates in cell wall biogenesis; peptidoglycan recycling. In terms of biological role, catalyzes the specific phosphorylation of 1,6-anhydro-N-acetylmuramic acid (anhMurNAc) with the simultaneous cleavage of the 1,6-anhydro ring, generating MurNAc-6-P. Is required for the utilization of anhMurNAc either imported from the medium or derived from its own cell wall murein, and thus plays a role in cell wall recycling. In Bordetella petrii (strain ATCC BAA-461 / DSM 12804 / CCUG 43448), this protein is Anhydro-N-acetylmuramic acid kinase.